A 108-amino-acid chain; its full sequence is UPF0060 membrane protein SAB2216c (108 aa).

The next 4 membrane-spanning stretches (helical) occupy residues 5–25, 31–51, 60–80, and 86–106; these read IFIF…IWLW, CSLV…IATF, VYAA…MVVD, and KYDV…LLPS.

It belongs to the UPF0060 family.

It is found in the cell membrane. In Staphylococcus aureus (strain bovine RF122 / ET3-1), this protein is UPF0060 membrane protein SAB2216c.